We begin with the raw amino-acid sequence, 161 residues long: Putative TRAP transporter small permease protein HI_1030 (161 aa).

The next 4 helical transmembrane spans lie at 13–33 (LEIL…LNVV), 51–71 (YLFI…NQHV), 86–106 (AILK…IIEG), and 135–155 (IAGI…IFFI).

This sequence belongs to the TRAP transporter small permease family.

It is found in the cell inner membrane. In Haemophilus influenzae (strain ATCC 51907 / DSM 11121 / KW20 / Rd), this protein is Putative TRAP transporter small permease protein HI_1030.